A 258-amino-acid chain; its full sequence is Phosphoribosylformylglycinamidine synthase subunit PurQ (258 aa).

Residues Ile-7–Asp-238 enclose the Glutamine amidotransferase type-1 domain. The Nucleophile role is filled by Cys-97. Catalysis depends on residues His-220 and Glu-222.

As to quaternary structure, part of the FGAM synthase complex composed of 1 PurL, 1 PurQ and 2 PurS subunits.

The protein localises to the cytoplasm. The enzyme catalyses N(2)-formyl-N(1)-(5-phospho-beta-D-ribosyl)glycinamide + L-glutamine + ATP + H2O = 2-formamido-N(1)-(5-O-phospho-beta-D-ribosyl)acetamidine + L-glutamate + ADP + phosphate + H(+). The catalysed reaction is L-glutamine + H2O = L-glutamate + NH4(+). The protein operates within purine metabolism; IMP biosynthesis via de novo pathway; 5-amino-1-(5-phospho-D-ribosyl)imidazole from N(2)-formyl-N(1)-(5-phospho-D-ribosyl)glycinamide: step 1/2. Its function is as follows. Part of the phosphoribosylformylglycinamidine synthase complex involved in the purines biosynthetic pathway. Catalyzes the ATP-dependent conversion of formylglycinamide ribonucleotide (FGAR) and glutamine to yield formylglycinamidine ribonucleotide (FGAM) and glutamate. The FGAM synthase complex is composed of three subunits. PurQ produces an ammonia molecule by converting glutamine to glutamate. PurL transfers the ammonia molecule to FGAR to form FGAM in an ATP-dependent manner. PurS interacts with PurQ and PurL and is thought to assist in the transfer of the ammonia molecule from PurQ to PurL. The protein is Phosphoribosylformylglycinamidine synthase subunit PurQ of Thermoplasma volcanium (strain ATCC 51530 / DSM 4299 / JCM 9571 / NBRC 15438 / GSS1).